Reading from the N-terminus, the 270-residue chain is 4-hydroxy-tetrahydrodipicolinate reductase (270 aa).

NAD(+) is bound by residues Gly-11 to Met-16 and Glu-37. Arg-38 contacts NADP(+). Residues Gly-101–Thr-103 and Ala-125–Met-128 contribute to the NAD(+) site. Catalysis depends on His-158, which acts as the Proton donor/acceptor. His-159 contributes to the (S)-2,3,4,5-tetrahydrodipicolinate binding site. Lys-162 serves as the catalytic Proton donor. Gly-168–Thr-169 provides a ligand contact to (S)-2,3,4,5-tetrahydrodipicolinate.

The protein belongs to the DapB family.

Its subcellular location is the cytoplasm. It carries out the reaction (S)-2,3,4,5-tetrahydrodipicolinate + NAD(+) + H2O = (2S,4S)-4-hydroxy-2,3,4,5-tetrahydrodipicolinate + NADH + H(+). The catalysed reaction is (S)-2,3,4,5-tetrahydrodipicolinate + NADP(+) + H2O = (2S,4S)-4-hydroxy-2,3,4,5-tetrahydrodipicolinate + NADPH + H(+). The protein operates within amino-acid biosynthesis; L-lysine biosynthesis via DAP pathway; (S)-tetrahydrodipicolinate from L-aspartate: step 4/4. Catalyzes the conversion of 4-hydroxy-tetrahydrodipicolinate (HTPA) to tetrahydrodipicolinate. The protein is 4-hydroxy-tetrahydrodipicolinate reductase of Shewanella oneidensis (strain ATCC 700550 / JCM 31522 / CIP 106686 / LMG 19005 / NCIMB 14063 / MR-1).